The following is a 114-amino-acid chain: MSTTSRVGSNEVKMEGQKRKVVSDPTHVTLKVKGQDEEDFRVFWVRRNAKLLKMMELYTKMRGIEWNTFRFLFDGSRIREYHTPDELERKDGDEIDAMLCQQSGFGPSSIKFRV.

The interval 1 to 20 is disordered; sequence MSTTSRVGSNEVKMEGQKRK. The Ubiquitin-like domain maps to 26–104; the sequence is THVTLKVKGQ…IDAMLCQQSG (79 aa). A Glycyl lysine isopeptide (Gly-Lys) (interchain with K-? in acceptor proteins) cross-link involves residue Gly104.

It belongs to the ubiquitin family. SUMO subfamily. As to quaternary structure, interacts with SAE2, SCE1, SIZ1 and MMS21 Covalently attached to a number of proteins.

Its subcellular location is the nucleus. It is found in the cytoplasm. Its function is as follows. Ubiquitin-like protein which can be covalently attached to target lysines as a monomer. Does not seem to be involved in protein degradation and may function as an antagonist of ubiquitin in the degradation process. The chain is Putative small ubiquitin-related modifier 4 (SUMO4) from Arabidopsis thaliana (Mouse-ear cress).